The primary structure comprises 374 residues: Alanine racemase (374 aa).

The active-site Proton acceptor; specific for D-alanine is Lys34. Residue Lys34 is modified to N6-(pyridoxal phosphate)lysine. Arg147 is a substrate binding site. Catalysis depends on Tyr271, which acts as the Proton acceptor; specific for L-alanine. Met319 is a substrate binding site.

The protein belongs to the alanine racemase family. The cofactor is pyridoxal 5'-phosphate.

The enzyme catalyses L-alanine = D-alanine. Its pathway is amino-acid biosynthesis; D-alanine biosynthesis; D-alanine from L-alanine: step 1/1. In terms of biological role, catalyzes the interconversion of L-alanine and D-alanine. May also act on other amino acids. The sequence is that of Alanine racemase (alr) from Actinobacillus pleuropneumoniae serotype 5b (strain L20).